We begin with the raw amino-acid sequence, 155 residues long: Small ribosomal subunit protein uS7c (155 aa).

This sequence belongs to the universal ribosomal protein uS7 family. In terms of assembly, part of the 30S ribosomal subunit.

It is found in the plastid. The protein localises to the chloroplast. Functionally, one of the primary rRNA binding proteins, it binds directly to 16S rRNA where it nucleates assembly of the head domain of the 30S subunit. The protein is Small ribosomal subunit protein uS7c (rps7) of Ananas comosus (Pineapple).